Reading from the N-terminus, the 202-residue chain is COMM domain-containing protein 10 (202 aa).

Ala-2 is modified (N-acetylalanine). In terms of domain architecture, COMM spans 133 to 202; the sequence is KLETVGWQLN…TIQAQLDSLT (70 aa). Ser-155 bears the Phosphoserine mark.

It belongs to the COMM domain-containing protein 10 family. Component of the commander complex consisting of the CCC subcomplex and the retriever subcomplex. Component of the CCC (COMMD/CCDC22/CCDC93) subcomplex consisting of COMMD1, COMMD2, COMMD3, COMMD4, COMMD5, COMMD6, COMMD7, COMMD8, COMMD9, COMMD10, CCDC22 and CCDC93; within the complex forms a heterodimer with COMMD5. Interacts with RELA, RELB, NFKB1/p105, NFKB2/p100. Interacts with CCDC22, CCDC93, SCNN1B, CUL1, CUL2, CUL3, CUL4A, CUL4B, CUL7. Ubiquitous.

It is found in the cytoplasm. The protein resides in the nucleus. Functionally, scaffold protein in the commander complex that is essential for endosomal recycling of transmembrane cargos; the commander complex is composed of the CCC subcomplex and the retriever subcomplex. May modulate activity of cullin-RING E3 ubiquitin ligase (CRL) complexes. May down-regulate activation of NF-kappa-B. The chain is COMM domain-containing protein 10 (COMMD10) from Homo sapiens (Human).